The chain runs to 273 residues: Putative phosphoenolpyruvate synthase regulatory protein (273 aa).

An ADP-binding site is contributed by 153–160 (GVSRSGKT).

The protein belongs to the pyruvate, phosphate/water dikinase regulatory protein family. PSRP subfamily.

It carries out the reaction [pyruvate, water dikinase] + ADP = [pyruvate, water dikinase]-phosphate + AMP + H(+). The catalysed reaction is [pyruvate, water dikinase]-phosphate + phosphate + H(+) = [pyruvate, water dikinase] + diphosphate. Its function is as follows. Bifunctional serine/threonine kinase and phosphorylase involved in the regulation of the phosphoenolpyruvate synthase (PEPS) by catalyzing its phosphorylation/dephosphorylation. This chain is Putative phosphoenolpyruvate synthase regulatory protein, found in Verminephrobacter eiseniae (strain EF01-2).